We begin with the raw amino-acid sequence, 587 residues long: Methylcrotonoyl-CoA carboxylase beta chain, mitochondrial (587 aa).

The transit peptide at 1-26 (MLRILGRRVVSASKELTSIQQWRIRP) directs the protein to the mitochondrion. The CoA carboxyltransferase N-terminal domain maps to 68–324 (MEGILSELRS…AAKQGMEGTF (257 aa)). Positions 68-579 (MEGILSELRS…SAALNRPLED (512 aa)) are carboxyltransferase. In terms of domain architecture, CoA carboxyltransferase C-terminal spans 333 to 579 (EPLYDINELR…SAALNRPLED (247 aa)). The acyl-CoA binding stretch occupies residues 367–396 (EFDEFKKQYGTTLVTGFARIYGQTVGIIGN).

This sequence belongs to the AccD/PCCB family. Probably a heterodimer composed of biotin-containing alpha subunits and beta subunits. In roots, cotyledons, leaves, flowers, ovaries, siliques and embryos.

The protein localises to the mitochondrion matrix. It carries out the reaction 3-methylbut-2-enoyl-CoA + hydrogencarbonate + ATP = 3-methyl-(2E)-glutaconyl-CoA + ADP + phosphate + H(+). It functions in the pathway amino-acid degradation; L-leucine degradation; (S)-3-hydroxy-3-methylglutaryl-CoA from 3-isovaleryl-CoA: step 2/3. Functionally, carboxyltransferase subunit of the 3-methylcrotonyl-CoA carboxylase, an enzyme that catalyzes the conversion of 3-methylcrotonyl-CoA to 3-methylglutaconyl-CoA, a critical step for leucine and isovaleric acid catabolism. The protein is Methylcrotonoyl-CoA carboxylase beta chain, mitochondrial (MCCB) of Arabidopsis thaliana (Mouse-ear cress).